Here is a 363-residue protein sequence, read N- to C-terminus: GTPase Obg (363 aa).

The Obg domain occupies 1–159 (MKFIDEAKIY…LELRLELRVL (159 aa)). An OBG-type G domain is found at 160–338 (ADVGLLGLPN…LIYAISEALE (179 aa)). Residues 166–173 (GLPNAGKS), 191–195 (FTTLH), 213–216 (DVPG), 284–287 (NKLD), and 319–321 (AAI) contribute to the GTP site. Mg(2+) contacts are provided by Ser-173 and Thr-193. Residues 342-363 (RPEIGDLDDNDEDSDEIIRDTE) form a disordered region. A compositionally biased stretch (acidic residues) spans 346-356 (GDLDDNDEDSD).

Belongs to the TRAFAC class OBG-HflX-like GTPase superfamily. OBG GTPase family. As to quaternary structure, monomer. The cofactor is Mg(2+).

It localises to the cytoplasm. Its function is as follows. An essential GTPase which binds GTP, GDP and possibly (p)ppGpp with moderate affinity, with high nucleotide exchange rates and a fairly low GTP hydrolysis rate. Plays a role in control of the cell cycle, stress response, ribosome biogenesis and in those bacteria that undergo differentiation, in morphogenesis control. In Dechloromonas aromatica (strain RCB), this protein is GTPase Obg.